The following is a 168-amino-acid chain: Lipoprotein signal peptidase (168 aa).

Transmembrane regions (helical) follow at residues 6 to 26, 70 to 90, and 98 to 118; these read VLAA…DQIT, WFLA…IAKL, and ALAL…RMLL. Residues Asp123 and Asp141 contribute to the active site. A helical transmembrane segment spans residues 139–159; that stretch reads IADSAICIGAALLVWDSLFGT.

This sequence belongs to the peptidase A8 family.

The protein resides in the cell inner membrane. The catalysed reaction is Release of signal peptides from bacterial membrane prolipoproteins. Hydrolyzes -Xaa-Yaa-Zaa-|-(S,diacylglyceryl)Cys-, in which Xaa is hydrophobic (preferably Leu), and Yaa (Ala or Ser) and Zaa (Gly or Ala) have small, neutral side chains.. The protein operates within protein modification; lipoprotein biosynthesis (signal peptide cleavage). Its function is as follows. This protein specifically catalyzes the removal of signal peptides from prolipoproteins. This chain is Lipoprotein signal peptidase, found in Teredinibacter turnerae (strain ATCC 39867 / T7901).